A 433-amino-acid chain; its full sequence is Nuclear distribution protein PAC1 (433 aa).

The 33-residue stretch at 8–40 folds into the LisH domain; that stretch reads QKDELHRAMLAYLHAAGMHNAYAALQHDAALAD. A coiled-coil region spans residues 57-84; the sequence is SVIRLQKKVIDLENRNAALLAELAAAAR. WD repeat units follow at residues 103 to 144, 146 to 184, 188 to 227, 230 to 269, 272 to 336, 339 to 378, and 381 to 429; these read SHRA…RTLK, HTKA…TNVK, GHDH…CIKT, GHAE…TKME, GHEH…CLRT, GHDN…CTKT, and AHSH…QTIK.

This sequence belongs to the WD repeat LIS1/nudF family. In terms of assembly, self-associates. Interacts with NDL1 and dynein.

The protein resides in the cytoplasm. It localises to the cytoskeleton. It is found in the spindle pole. Its function is as follows. Positively regulates the activity of the minus-end directed microtubule motor protein dynein. Plays a central role in positioning the mitotic spindle at the bud neck during cell division. Targets cytoplasmic dynein to microtubule plus ends, thereby promoting dynein-mediated microtubule sliding along the bud cortex and consequently the movement of the mitotic spindle to the bud neck. This chain is Nuclear distribution protein PAC1, found in Cryptococcus neoformans var. neoformans serotype D (strain B-3501A) (Filobasidiella neoformans).